Here is a 212-residue protein sequence, read N- to C-terminus: Eggshell protein 1 (212 aa).

The N-terminal stretch at 1-27 (MKSSLTLLFLAAIGYTIAYPPPSDYDS) is a signal peptide. Residues 155–212 (RKNGHGKGGKGGNGGGGGKGGGKGGGNGKGNGKGGGGKNGGGKGGNGGKGGSYAPSYY) are disordered. A compositionally biased stretch (gly residues) spans 163–205 (GKGGNGGGGGKGGGKGGGNGKGNGKGGGGKNGGGKGGNGGKGG).

As to expression, detected only in mature female parasites.

The protein is Eggshell protein 1 (ESG-1) of Schistosoma japonicum (Blood fluke).